Reading from the N-terminus, the 198-residue chain is MYDYIKGQLTKITAKYIVVEANGLGYMINVANPYSFTDSVNQLVTIYLHQVIREDAHLLFGFHTKDEKDVFLKLISVSGIGPTTALAIVAVDDNEGLVNAIDNSDIKYLMKFPKIGKKTAQQMVLDLAGKFVEAPQETGNTKARSNKAGNTQLDEAIEALLALGYKATELKKIRAFFEGTSETAEQYIKSALKLLMKG.

Residues 1 to 63 (MYDYIKGQLT…EDAHLLFGFH (63 aa)) are domain I. The interval 64 to 142 (TKDEKDVFLK…EAPQETGNTK (79 aa)) is domain II. The flexible linker stretch occupies residues 143–147 (ARSNK). Residues 148-198 (AGNTQLDEAIEALLALGYKATELKKIRAFFEGTSETAEQYIKSALKLLMKG) are domain III.

It belongs to the RuvA family. Homotetramer. Forms an RuvA(8)-RuvB(12)-Holliday junction (HJ) complex. HJ DNA is sandwiched between 2 RuvA tetramers; dsDNA enters through RuvA and exits via RuvB. An RuvB hexamer assembles on each DNA strand where it exits the tetramer. Each RuvB hexamer is contacted by two RuvA subunits (via domain III) on 2 adjacent RuvB subunits; this complex drives branch migration. In the full resolvosome a probable DNA-RuvA(4)-RuvB(12)-RuvC(2) complex forms which resolves the HJ.

The protein resides in the cytoplasm. In terms of biological role, the RuvA-RuvB-RuvC complex processes Holliday junction (HJ) DNA during genetic recombination and DNA repair, while the RuvA-RuvB complex plays an important role in the rescue of blocked DNA replication forks via replication fork reversal (RFR). RuvA specifically binds to HJ cruciform DNA, conferring on it an open structure. The RuvB hexamer acts as an ATP-dependent pump, pulling dsDNA into and through the RuvAB complex. HJ branch migration allows RuvC to scan DNA until it finds its consensus sequence, where it cleaves and resolves the cruciform DNA. In Streptococcus pyogenes serotype M18 (strain MGAS8232), this protein is Holliday junction branch migration complex subunit RuvA.